The following is a 314-amino-acid chain: Zinc transporter ZIP3 (314 aa).

The Extracellular segment spans residues 1–3; it reads MVK. The chain crosses the membrane as a helical span at residues 4–24; it reads LLVAKILCMVGVFFFMLLGSL. Residues 25 to 42 lie on the Cytoplasmic side of the membrane; the sequence is LPVKIIETDFEKAHRSKK. The chain crosses the membrane as a helical span at residues 43 to 63; sequence ILSLCNTFGGGVFLATCFNAL. Topologically, residues 64 to 85 are extracellular; the sequence is LPAVREKLQKVLSLGHISTDYP. The helical transmembrane segment at 86–106 threads the bilayer; it reads LAETILLLGFFMTVFLEQLIL. Over 107-169 the chain is Cytoplasmic; the sequence is TFRKEKPSFI…QGLSRASPVR (63 aa). Phosphoserine is present on residues serine 125 and serine 129. A helical membrane pass occupies residues 170-190; sequence LLSLAFALSAHSVFEGLALGL. Over 191 to 196 the chain is Extracellular; that stretch reads QEEGEK. The chain crosses the membrane as a helical span at residues 197–217; that stretch reads VVSLFVGVAVHETLVAVALGI. The Cytoplasmic segment spans residues 218–229; it reads SMARSAMPLRDA. The helical transmembrane segment at 230 to 250 threads the bilayer; it reads AKLAVTVSAMIPLGIGLGLGI. Topologically, residues 251 to 262 are extracellular; it reads ESAQGVPGSVAS. Residues 263–283 traverse the membrane as a helical segment; it reads VLLQGLAGGTFLFITFLEILA. Residues 284-292 are Cytoplasmic-facing; sequence KELEEKSDR. The helical transmembrane segment at 293–313 threads the bilayer; the sequence is LLKVLFLVLGYTVLAGMVFLK. Position 314 (tryptophan 314) is a topological domain, extracellular.

It belongs to the ZIP transporter (TC 2.A.5) family.

The protein resides in the cell membrane. It is found in the apical cell membrane. The enzyme catalyses Zn(2+)(in) = Zn(2+)(out). Transporter for the divalent cation Zn(2+). Mediates the influx of Zn(2+) into cells from extracellular space. Controls Zn(2+) accumulation into dentate gyrus granule cells in the hippocampus. Mediates Zn(2+) reuptake from the secreted milk within the alveolar lumen. The sequence is that of Zinc transporter ZIP3 from Homo sapiens (Human).